A 410-amino-acid polypeptide reads, in one-letter code: BRCA1-A complex subunit Abraxas 1 (410 aa).

An MPN domain is found at T7–L160. Residue S48 is modified to Phosphoserine. Positions S208–Q261 form a coiled coil. The tract at residues D354–F410 is disordered. Polar residues predominate over residues N368 to P389. A phosphoserine mark is found at S387 and S388. T391 carries the phosphothreonine modification. S407 bears the Phosphoserine mark. A pSXXF motif motif is present at residues S407 to F410.

Belongs to the FAM175 family. Abraxas subfamily. Component of the ARISC complex, at least composed of UIMC1/RAP80, ABRAXAS1, BRCC3/BRCC36, BABAM2 and BABAM1/NBA1. Component of the BRCA1-A complex, at least composed of the BRCA1, BARD1, UIMC1/RAP80, ABRAXAS1, BRCC3/BRCC36, BABAM2 and BABAM1/NBA1. In the complex, interacts directly with UIMC1/RAP80, BRCC3/BRCC36 and BABAM2. Homodimer. Interacts directly (when phosphorylated at Ser-407) with BRCA1. The phosphorylated homodimer can interact directly with two BRCA1 chains, giving rise to a heterotetramer. Binds polyubiquitin. Phosphorylation of Ser-407 of the pSXXF motif by ATM or ATR constitutes a specific recognition motif for the BRCT domain of BRCA1.

The protein localises to the nucleus. Its function is as follows. Involved in DNA damage response and double-strand break (DSB) repair. Component of the BRCA1-A complex, acting as a central scaffold protein that assembles the various components of the complex and mediates the recruitment of BRCA1. The BRCA1-A complex specifically recognizes 'Lys-63'-linked ubiquitinated histones H2A and H2AX at DNA lesion sites, leading to target the BRCA1-BARD1 heterodimer to sites of DNA damage at DSBs. This complex also possesses deubiquitinase activity that specifically removes 'Lys-63'-linked ubiquitin on histones H2A and H2AX. The polypeptide is BRCA1-A complex subunit Abraxas 1 (Bos taurus (Bovine)).